The following is a 396-amino-acid chain: L-lactate dehydrogenase (396 aa).

Residues 1–380 enclose the FMN hydroxy acid dehydrogenase domain; the sequence is MIISAASDYR…TQDSLVQGLG (380 aa). Residue tyrosine 24 coordinates substrate. Residues serine 106 and glutamine 127 each contribute to the FMN site. Tyrosine 129 provides a ligand contact to substrate. Threonine 155 contributes to the FMN binding site. A substrate-binding site is contributed by arginine 164. Lysine 251 is an FMN binding site. Histidine 275 functions as the Proton acceptor in the catalytic mechanism. A substrate-binding site is contributed by arginine 278. 306–330 is a binding site for FMN; sequence DSGIRNGLDVVRMIALGADTVLLGR.

Belongs to the FMN-dependent alpha-hydroxy acid dehydrogenase family. FMN is required as a cofactor.

Its subcellular location is the cell inner membrane. It carries out the reaction (S)-lactate + A = pyruvate + AH2. Its function is as follows. Catalyzes the conversion of L-lactate to pyruvate. Is coupled to the respiratory chain. The sequence is that of L-lactate dehydrogenase from Escherichia coli O7:K1 (strain IAI39 / ExPEC).